Consider the following 150-residue polypeptide: Probable antibacterial peptide (150 aa).

Residues 1-19 form the signal peptide; sequence MHIARFCLLSSMAVLALSA.

Its subcellular location is the secreted. In terms of biological role, has antibacterial activity in vitro. This chain is Probable antibacterial peptide, found in Riptortus clavatus (Bean bug).